We begin with the raw amino-acid sequence, 264 residues long: MAKLLLFLLPAILGLLVPRSAVALGTNYLLSGQTLDREGHLKNGDFDLVMQDDCNLVLYNGNWQSNTANKGRDCKLTLTDYGELVIKNGDGSTVWRSRAQSVKGNYAAVVHPDGRLVVFGPSVFKIDPWVPGLNSLRFRNIPFTNNLLFSGQVLYGDGRLTAKSHQLVMQGDCNLVLYGGKYGWQSNTHGNGEHCFLRLNHKGELIIKDDDFKTIWSSSSSSKHGDYVLILRDDGFAVIYGPAIWETSPQAKEKMIGMVTAGKL.

The N-terminal stretch at 1–23 (MAKLLLFLLPAILGLLVPRSAVA) is a signal peptide. 2 Bulb-type lectin domains span residues 26 to 131 (TNYL…PWVP) and 145 to 252 (NNLL…PQAK). Beta-D-mannose-binding positions include 51–55 (QDDCN), Tyr-59, Trp-63, Gln-64, 170–174 (QGDCN), Tyr-178, and 182–185 (YGWQ). The Carbohydrate-binding motif 1 motif lies at 51 to 59 (QDDCNLVLY). 2 cysteine pairs are disulfide-bonded: Cys-54–Cys-74 and Cys-173–Cys-195. The Carbohydrate-binding motif 2 signature appears at 170 to 178 (QGDCNLVLY).

In terms of assembly, forms heterotetramer of 2 chains 1 and 2 chains 2 arranged as a dimer of chain 1 and chain 2 heterodimers.

The protein localises to the secreted. Its function is as follows. Mannose-specific lectin. Shows agglutinating activity towards erythrocytes from rabbit. Has insecticidal activity against cotton aphids and other hemipteran insects. The sequence is that of Mannose-specific lectin CEA from Colocasia esculenta (Wild taro).